Consider the following 701-residue polypeptide: Elongation factor G (701 aa).

A tr-type G domain is found at 11–287; the sequence is NKVRNIGIMA…AVVDYLPSPL (277 aa). GTP-binding positions include 20-27, 84-88, and 138-141; these read AHIDAGKT, DTPGH, and NKMD.

Belongs to the TRAFAC class translation factor GTPase superfamily. Classic translation factor GTPase family. EF-G/EF-2 subfamily.

It localises to the cytoplasm. Catalyzes the GTP-dependent ribosomal translocation step during translation elongation. During this step, the ribosome changes from the pre-translocational (PRE) to the post-translocational (POST) state as the newly formed A-site-bound peptidyl-tRNA and P-site-bound deacylated tRNA move to the P and E sites, respectively. Catalyzes the coordinated movement of the two tRNA molecules, the mRNA and conformational changes in the ribosome. The protein is Elongation factor G of Mycobacterium sp. (strain JLS).